A 266-amino-acid polypeptide reads, in one-letter code: Tryptophan synthase alpha chain (266 aa).

Active-site proton acceptor residues include glutamate 49 and aspartate 60.

Belongs to the TrpA family. Tetramer of two alpha and two beta chains.

The catalysed reaction is (1S,2R)-1-C-(indol-3-yl)glycerol 3-phosphate + L-serine = D-glyceraldehyde 3-phosphate + L-tryptophan + H2O. Its pathway is amino-acid biosynthesis; L-tryptophan biosynthesis; L-tryptophan from chorismate: step 5/5. In terms of biological role, the alpha subunit is responsible for the aldol cleavage of indoleglycerol phosphate to indole and glyceraldehyde 3-phosphate. The sequence is that of Tryptophan synthase alpha chain from Trichormus variabilis (strain ATCC 29413 / PCC 7937) (Anabaena variabilis).